A 95-amino-acid chain; its full sequence is Co-chaperonin GroES (95 aa).

This sequence belongs to the GroES chaperonin family. Heptamer of 7 subunits arranged in a ring. Interacts with the chaperonin GroEL.

It localises to the cytoplasm. Functionally, together with the chaperonin GroEL, plays an essential role in assisting protein folding. The GroEL-GroES system forms a nano-cage that allows encapsulation of the non-native substrate proteins and provides a physical environment optimized to promote and accelerate protein folding. GroES binds to the apical surface of the GroEL ring, thereby capping the opening of the GroEL channel. The protein is Co-chaperonin GroES of Neisseria meningitidis serogroup C (strain 053442).